The following is a 264-amino-acid chain: Thymidylate synthase (264 aa).

Residue R21 coordinates dUMP. A (6R)-5,10-methylene-5,6,7,8-tetrahydrofolate-binding site is contributed by H51. 126-127 (RR) lines the dUMP pocket. The active-site Nucleophile is the C146. DUMP contacts are provided by residues 166–169 (RSAD), N177, and 207–209 (HLY). D169 lines the (6R)-5,10-methylene-5,6,7,8-tetrahydrofolate pocket. A (6R)-5,10-methylene-5,6,7,8-tetrahydrofolate-binding site is contributed by A263.

It belongs to the thymidylate synthase family. Bacterial-type ThyA subfamily. As to quaternary structure, homodimer.

It localises to the cytoplasm. The catalysed reaction is dUMP + (6R)-5,10-methylene-5,6,7,8-tetrahydrofolate = 7,8-dihydrofolate + dTMP. The protein operates within pyrimidine metabolism; dTTP biosynthesis. In terms of biological role, catalyzes the reductive methylation of 2'-deoxyuridine-5'-monophosphate (dUMP) to 2'-deoxythymidine-5'-monophosphate (dTMP) while utilizing 5,10-methylenetetrahydrofolate (mTHF) as the methyl donor and reductant in the reaction, yielding dihydrofolate (DHF) as a by-product. This enzymatic reaction provides an intracellular de novo source of dTMP, an essential precursor for DNA biosynthesis. This is Thymidylate synthase from Azotobacter vinelandii (strain DJ / ATCC BAA-1303).